A 441-amino-acid chain; its full sequence is Arginine biosynthesis bifunctional protein ArgJ, mitochondrial (441 aa).

Residues T177, K204, T215, E301, N436, and S441 each contribute to the substrate site. T215 serves as the catalytic Nucleophile.

The protein belongs to the ArgJ family. In terms of assembly, heterodimer of an alpha and a beta chain. Post-translationally, the alpha and beta chains are autoproteolytically processed from a single precursor protein within the mitochondrion.

The protein localises to the mitochondrion matrix. The enzyme catalyses N(2)-acetyl-L-ornithine + L-glutamate = N-acetyl-L-glutamate + L-ornithine. It carries out the reaction L-glutamate + acetyl-CoA = N-acetyl-L-glutamate + CoA + H(+). The protein operates within amino-acid biosynthesis; L-arginine biosynthesis; L-ornithine and N-acetyl-L-glutamate from L-glutamate and N(2)-acetyl-L-ornithine (cyclic): step 1/1. It participates in amino-acid biosynthesis; L-arginine biosynthesis; N(2)-acetyl-L-ornithine from L-glutamate: step 1/4. In terms of biological role, catalyzes two activities which are involved in the cyclic version of arginine biosynthesis: the synthesis of acetylglutamate from glutamate and acetyl-CoA, and of ornithine by transacetylation between acetylornithine and glutamate. This Candida glabrata (strain ATCC 2001 / BCRC 20586 / JCM 3761 / NBRC 0622 / NRRL Y-65 / CBS 138) (Yeast) protein is Arginine biosynthesis bifunctional protein ArgJ, mitochondrial.